Consider the following 463-residue polypeptide: Regulator of microtubule dynamics protein 3 (463 aa).

Residues 1-4 are Mitochondrial intermembrane-facing; the sequence is MSKL. The chain crosses the membrane as a helical span at residues 5–27; that stretch reads ILSYRIGLGLVVGAAAGAVIYIV. At 28–463 the chain is on the cytoplasmic side; sequence FRRNRKKTRK…PATAEEELLV (436 aa). Positions 146–161 match the FFAT motif; that stretch reads IYFTATSGAAHTDAES. A disordered region spans residues 153 to 192; the sequence is GAAHTDAESEGGYSTAYAESDFERESSRASEAEEEDEVSC. Basic and acidic residues predominate over residues 173–183; the sequence is DFERESSRASE. The stretch at 279–302 forms a coiled coil; the sequence is AEDAQEKKSFASEGKEEAEAALQK.

It belongs to the RMDN family. In terms of assembly, interacts with PTPN2. Interacts with microtubules. Interacts with VAPB. Interacts (FFAT motif) with MOSPD2 (via MSP domain).

The protein localises to the mitochondrion outer membrane. The protein resides in the cytoplasm. Its subcellular location is the nucleus. It localises to the cytoskeleton. It is found in the spindle. The protein localises to the spindle pole. In terms of biological role, involved in cellular calcium homeostasis regulation. The polypeptide is Regulator of microtubule dynamics protein 3 (rmdn3) (Xenopus laevis (African clawed frog)).